The following is a 379-amino-acid chain: ATP-sensitive inward rectifier potassium channel 10 (379 aa).

At 1–61 the chain is on the cytoplasmic side; it reads MTSVAKVYYS…LKDLWTTFID (61 aa). Residue Arg-36 coordinates 1,2-dioctanoyl-sn-glycero-3-phospho-(1D-myo-inositol-4,5-bisphosphate). The chain crosses the membrane as a helical span at residues 62 to 88; sequence MQWRYKLLLFSATFAGTWFLFGVVWYL. Residues 89–114 are Extracellular-facing; the sequence is VAVAHGDLLELDPPANHTPCVVQVHT. A disulfide bridge connects residues Cys-108 and Cys-140. Positions 115 to 131 form an intramembrane region, discontinuously helical; Pore-forming; the sequence is LTGAFLFSLESQTTIGY. Positions 128-133 match the Selectivity filter motif; that stretch reads TIGYGF. At 132–140 the chain is on the extracellular side; the sequence is GFRYISEEC. The helical transmembrane segment at 141-166 threads the bilayer; it reads PLAIVLLIAQLVLTTILEIFITGTFL. The Cytoplasmic segment spans residues 167–379; sequence AKIARPKKRA…SALSVRISNV (213 aa). Lys-168, Arg-171, and Lys-173 together coordinate 1,2-dioctanoyl-sn-glycero-3-phospho-(1D-myo-inositol-4,5-bisphosphate). 210 to 217 contacts ATP; it reads GCQVTGKL.

This sequence belongs to the inward rectifier-type potassium channel (TC 1.A.2.1) family. KCNJ10 subfamily. Homotetramer. In kidney cells, it forms heteromeric channels with Kir5.1/KCNJ16; this interaction is required for KCNJ16 localization to the basolateral membrane. Interacts with MAGI1, alone and possibly as a heteromer with KCNJ16; this interaction may facilitate KCNJ10/KCNJ16 potassium channel expression at the basolateral membrane in kidney cells. Interacts with PATJ. In terms of tissue distribution, expressed in kidney (at protein level). In the nephron, expressed in the distal convoluted tubule, the connecting tubule, the collecting duct and cortical thick ascending limbs.

The protein localises to the membrane. Its subcellular location is the basolateral cell membrane. The enzyme catalyses K(+)(in) = K(+)(out). With respect to regulation, channel activity is strongly regulated by variations of cytosolic pH; channels are activated by alkaline and inhibited by acidic pH values. Inhibited by Ba(2+) and Cs(+). Activated by phosphatidylinositol 4,5 biphosphate (PtdIns(4,5)P2). In terms of biological role, may be responsible for potassium buffering action of glial cells in the brain. Inward rectifier potassium channels are characterized by a greater tendency to allow potassium to flow into the cell rather than out of it. Their voltage dependence is regulated by the concentration of extracellular potassium; as external potassium is raised, the voltage range of the channel opening shifts to more positive voltages. The inward rectification is mainly due to the blockage of outward current by internal magnesium. Can be blocked by extracellular barium and cesium. In the kidney, together with KCNJ16, mediates basolateral K(+) recycling in distal tubules; this process is critical for Na(+) reabsorption at the tubules. The chain is ATP-sensitive inward rectifier potassium channel 10 from Homo sapiens (Human).